The following is a 189-amino-acid chain: GTPase HRas (189 aa).

10-17 is a GTP binding site; the sequence is GAKGVGKS. An Effector region motif is present at residues 32 to 40; it reads YDPTIEDSY. Residues 57–61 and 116–119 contribute to the GTP site; these read DTAGQ and NKCD. S-palmitoyl cysteine; by host attachment occurs at residues Cys181 and Cys184. Cys186 carries the post-translational modification Cysteine methyl ester; by host. Cys186 is lipidated: S-farnesyl cysteine; by host. Residues 187–189 constitute a propeptide, removed in mature form; it reads VLS.

It belongs to the small GTPase superfamily. Ras family.

The protein localises to the host cell membrane. It carries out the reaction GTP + H2O = GDP + phosphate + H(+). Alternates between an inactive form bound to GDP and an active form bound to GTP. Activated by a guanine nucleotide-exchange factor (GEF) and inactivated by a GTPase-activating protein (GAP). The sequence is that of GTPase HRas (H-RAS) from Moloney murine sarcoma virus (MoMSV).